Here is a 309-residue protein sequence, read N- to C-terminus: tRNA dimethylallyltransferase (309 aa).

11–18 (GPTASGKS) serves as a coordination point for ATP. 13–18 (TASGKS) is a substrate binding site. 2 interaction with substrate tRNA regions span residues 36-39 (DSMQ) and 160-164 (QRLLR).

The protein belongs to the IPP transferase family. In terms of assembly, monomer. Mg(2+) is required as a cofactor.

The catalysed reaction is adenosine(37) in tRNA + dimethylallyl diphosphate = N(6)-dimethylallyladenosine(37) in tRNA + diphosphate. In terms of biological role, catalyzes the transfer of a dimethylallyl group onto the adenine at position 37 in tRNAs that read codons beginning with uridine, leading to the formation of N6-(dimethylallyl)adenosine (i(6)A). This chain is tRNA dimethylallyltransferase, found in Caulobacter sp. (strain K31).